The primary structure comprises 373 residues: MTEVPWSAVPNGTDAAFLAGLGSLWGNSTIASTAAVSSSFRCALIKTGFQFYYLPAVYILVFIIGFLGNSVAIWMFVFHMKPWSGISVYMFNLALADFLYVLTLPALIFYYFNKTDWIFGDVMCKLQRFIFHVNLYGSILFLTCISAHRYSGVVYPLKSLGRLKKKNAIYVSVLVWLIVVVAISPILFYSGTGIRKNKTVTCYDSTSDEYLRSYFIYSMCTTVAMFCIPLVLILGCYGLIVRALIYKDLDNSPLRRKSIYLVIIVLTVFAVSYIPFHVMKTMNLRARLDFQTPEMCDFNDRVYATYQVTRGLASLNSCVDPILYFLAGDTFRRRLSRATRKASRRSEANLQSKSEEMTLNILSEFKQNGDTSL.

The Extracellular portion of the chain corresponds to 1–51 (MTEVPWSAVPNGTDAAFLAGLGSLWGNSTIASTAAVSSSFRCALIKTGFQF). Asn11 and Asn27 each carry an N-linked (GlcNAc...) asparagine glycan. Disulfide bonds link Cys42/Cys296 and Cys124/Cys202. Residue Lys46 participates in ADP binding. Residues 52-74 (YYLPAVYILVFIIGFLGNSVAIW) traverse the membrane as a helical segment. At 75-87 (MFVFHMKPWSGIS) the chain is on the cytoplasmic side. The chain crosses the membrane as a helical span at residues 88-109 (VYMFNLALADFLYVLTLPALIF). The Extracellular segment spans residues 110-125 (YYFNKTDWIFGDVMCK). An N-linked (GlcNAc...) asparagine glycan is attached at Asn113. A helical membrane pass occupies residues 126 to 147 (LQRFIFHVNLYGSILFLTCISA). Topologically, residues 148 to 166 (HRYSGVVYPLKSLGRLKKK) are cytoplasmic. The chain crosses the membrane as a helical span at residues 167–188 (NAIYVSVLVWLIVVVAISPILF). Topologically, residues 189 to 214 (YSGTGIRKNKTVTCYDSTSDEYLRSY) are extracellular. Asn197 carries an N-linked (GlcNAc...) asparagine glycan. ADP is bound at residue 203–205 (YDS). Residues 215–237 (FIYSMCTTVAMFCIPLVLILGCY) traverse the membrane as a helical segment. Residues 238–260 (GLIVRALIYKDLDNSPLRRKSIY) are Cytoplasmic-facing. A helical membrane pass occupies residues 261 to 284 (LVIIVLTVFAVSYIPFHVMKTMNL). Residues 283–287 (NLRAR), 303–306 (YATY), and Arg310 each bind ADP. Over 285–303 (RARLDFQTPEMCDFNDRVY) the chain is Extracellular. Residues 304–325 (ATYQVTRGLASLNSCVDPILYF) traverse the membrane as a helical segment. Residues 326–373 (LAGDTFRRRLSRATRKASRRSEANLQSKSEEMTLNILSEFKQNGDTSL) lie on the Cytoplasmic side of the membrane.

The protein belongs to the G-protein coupled receptor 1 family. In terms of tissue distribution, expressed in muscle, heart, liver, kidney, lung, brain, spleen, but not in testis.

It is found in the cell membrane. Receptor for extracellular adenine nucleotides such as ADP. In platelets, binding to ADP leads to mobilization of intracellular calcium ions via activation of phospholipase C, a change in platelet shape, and ultimately platelet aggregation. The protein is P2Y purinoceptor 1 (P2ry1) of Rattus norvegicus (Rat).